The following is a 512-amino-acid chain: Nuclear fusion protein FUS1 (512 aa).

A helical transmembrane segment spans residues 72–96; it reads IGLSIGLPIGIFCFGLLILLCYFYL. Residues 97-512 are hydrophilic; that stretch reads KRNSVSISNP…VPGDCLQEYD (416 aa). The residue at position 178 (T178) is a Phosphothreonine. Phosphoserine occurs at positions 190 and 256. Residues T281 and T424 each carry the phosphothreonine modification. The SH3 domain maps to 436-512; sequence QLGKTYTVIQ…VPGDCLQEYD (77 aa).

In terms of processing, O-glycosylated.

It localises to the membrane. Required for cell fusion. Negatively regulates Sho1p signaling to ensure efficient cell fusion. Functionally, interacts with SHO1. This Saccharomyces cerevisiae (strain ATCC 204508 / S288c) (Baker's yeast) protein is Nuclear fusion protein FUS1 (FUS1).